The following is a 1394-amino-acid chain: Cyclic nucleotide-gated channel beta-1 (1394 aa).

Disordered stretches follow at residues 1 to 95, 112 to 253, and 271 to 675; these read MLGW…AHSS, VPQP…QDSA, and VIRG…SQNS. Residues 1-762 are Cytoplasmic-facing; the sequence is MLGWVQRVLP…WKKYQFPQSI (762 aa). Polar residues-rich tracts occupy residues 68-86 and 116-125; these read PQGT…QAQV and AHSSRPSQNI. 2 stretches are compositionally biased toward basic and acidic residues: residues 300-312 and 336-355; these read EESH…VDPH and DEEK…RIQE. Positions 356-387 are enriched in acidic residues; the sequence is EKEDEEEEKEDGEEEEEEGREKEEEEGEEKEE. Over residues 388–408 the composition is skewed to basic and acidic residues; the sequence is EEGREKEEEEGEKKEEEGREK. Over residues 409–418 the composition is skewed to acidic residues; it reads EEEEGGEKED. Basic and acidic residues predominate over residues 419–433; the sequence is EEGREKEEEEGRGKE. Composition is skewed to acidic residues over residues 452 to 464 and 481 to 490; these read EGRE…EEEQ and DRSEESETQD. 2 stretches are compositionally biased toward low complexity: residues 493–508 and 529–554; these read EVGG…GAQA and EVGG…AQDQ. The segment covering 654–675 has biased composition (polar residues); it reads DPTSPQGTDDQDRATSTASQNS. Residues 671 to 681 are calmodulin-binding CaM1; that stretch reads ASQNSAIINDR. The IQ-like signature appears at 682-692; it reads LQELVKLFKER. Residues 699–732 form a disordered region; the sequence is KLIDPDVTSDEESPKPSPAKKAPEPAPEVKPAEA. A helical transmembrane segment spans residues 763-793; the sequence is DPLTNLMYILWLFFVVLAWNWNCWLIPVRWA. The Extracellular segment spans residues 794 to 798; that stretch reads FPYQT. Residues 799–825 traverse the membrane as a helical segment; that stretch reads PDNIHLWLLMDYLCDLIYLLDITVFQM. Residues 826-837 are Cytoplasmic-facing; sequence RLQFVRGGDIIT. A helical transmembrane segment spans residues 838–861; that stretch reads DKKEMRNNYVKSQRFKMDMLCLLP. Residues 862–872 lie on the Extracellular side of the membrane; it reads LDLLYLKFGVN. The helical transmembrane segment at 873–887 threads the bilayer; the sequence is PLLRLPRCLKYMAFF. Residues 888 to 900 are Cytoplasmic-facing; that stretch reads EFNNRLESILSKA. The segment at 900–999 is ion conduction pathway; sequence AYVYRVIRTT…IGQMRDVVGA (100 aa). A helical membrane pass occupies residues 901-922; that stretch reads YVYRVIRTTAYLLYSLHLNSCL. The Extracellular segment spans residues 923 to 931; the sequence is YYWASAYEG. Transmembrane regions (helical) follow at residues 932 to 974 and 975 to 1002; these read LGST…EIVF and QGLN…AATA. The segment at 959-962 is selectivity filter; it reads TIGG. Over 1003–1394 the chain is Cytoplasmic; sequence GQTYYRSCMD…EEARKEKEEE (392 aa). A cyclic nucleotide-binding domain region spans residues 1082 to 1198; that stretch reads RQMIFDMLKR…LLRKKARRML (117 aa). 3',5'-cyclic GMP is bound by residues glycine 1143, glutamate 1144, serine 1146, arginine 1156, and threonine 1157. Residue arginine 1156 participates in 3',5'-cyclic AMP binding. Residues 1261–1267 form a calmodulin-binding CaM2 region; the sequence is QQQLLEQ. Residues 1265–1394 form a disordered region; that stretch reads LEQAKSSEDA…EEARKEKEEE (130 aa). Residues 1285–1326 show a composition bias toward pro residues; the sequence is EQPPRPEPPAPEAPAPEPTAPEPLAPEAPAPEAPAPSSPPPA. 2 stretches are compositionally biased toward basic and acidic residues: residues 1329-1345 and 1364-1376; these read ERPE…EHPV and VPEK…KKEE.

It belongs to the cyclic nucleotide-gated cation channel (TC 1.A.1.5) family. CNGB1 subfamily. As to quaternary structure, the rod cyclic nucleotide-gated channel is a heterotetramer composed of CNGA1 and CNGB1 subunits with 3:1 stoichiometry. CNGA1:CNGB1 channel binds Ca(2+)-bound CALM1 via CaM1 and CaM2 regions of the CNGB1 subunit; this interaction modulates the affinity of the channel for cNMPs in response to intracellular Ca(2+) levels. The olfactory cyclic nucleotide-gated channel is a heterotetramer composed of CNGA2, CNGA4 and CNGB1 subunits with 2:1:1 stoichiometry. Retina, testis, kidney, heart and brain.

Its subcellular location is the membrane. It carries out the reaction Ca(2+)(in) = Ca(2+)(out). It catalyses the reaction Na(+)(in) = Na(+)(out). The catalysed reaction is K(+)(in) = K(+)(out). The enzyme catalyses NH4(+)(in) = NH4(+)(out). It carries out the reaction Rb(+)(in) = Rb(+)(out). It catalyses the reaction Li(+)(in) = Li(+)(out). The catalysed reaction is Cs(+)(in) = Cs(+)(out). In terms of biological role, pore-forming subunit of the rod cyclic nucleotide-gated channel. Mediates rod photoresponses at dim light converting transient changes in intracellular cGMP levels into electrical signals. In the dark, cGMP levels are high and keep the channel open enabling a steady inward current carried by Na(+) and Ca(2+) ions that leads to membrane depolarization and neurotransmitter release from synaptic terminals. Upon photon absorption cGMP levels decline leading to channel closure and membrane hyperpolarization that ultimately slows neurotransmitter release and signals the presence of light, the end point of the phototransduction cascade. Pore-forming subunit of the olfactory cyclic nucleotide-gated channel. Operates in the cilia of olfactory sensory neurons where chemical stimulation of the odorant is converted to an electrical signal. Mediates odorant-induced cAMP-dependent Ca(2+) influx triggering neuron depolarization. The rise of intracellular Ca(2+) levels potentiates the olfactory response by activating Ca(2+)-dependent Cl(-) channels, but it also serves as a negative feedback signal to desensitize the channel for rapid adaptation to odorants. Conducts cGMP- and cAMP-gated ion currents, with permeability for monovalent and divalent cations. The selectivity for Ca(2+) over Na(+) increases with cGMP concentrations, whereas the selectivity among monovalent ions is independent of the cGMP levels. This is Cyclic nucleotide-gated channel beta-1 from Bos taurus (Bovine).